A 299-amino-acid polypeptide reads, in one-letter code: uncharacterized protein (299 aa).

The segment covering 1–10 has biased composition (polar residues); it reads MTSIIQSPPL. Disordered stretches follow at residues 1 to 30, 54 to 89, and 148 to 212; these read MTSI…NNNN, KLNN…INNN, and QDYT…SDYV. Residues 56 to 89 are compositionally biased toward low complexity; the sequence is NNNNNNNNNNNNNNNNNNNNNNNNSSSNNNINNN. Composition is skewed to acidic residues over residues 150–169 and 177–212; these read YTDE…DEEE and ECEE…SDYV.

This is an uncharacterized protein from Dictyostelium discoideum (Social amoeba).